A 360-amino-acid polypeptide reads, in one-letter code: Phospho-N-acetylmuramoyl-pentapeptide-transferase (360 aa).

Helical transmembrane passes span 21–41, 73–93, 94–114, 132–152, 168–188, 199–219, 239–259, 263–283, 288–308, and 338–358; these read YLTFRSVLALLTALLLSLWIG, TMGGLMILATITVSTLLWGDL, SNPYIWFSLFVLLGYGAIGFV, WKYFWLSLVSLIAIFGMYALG, IMPQLGLFYVVLAYFVIVGTS, GLAIMPTVFVAGAFAIIAWAT, LVIFCTAIVGAGLGFLWFNTY, VFMGDVGSLALGGALGTIAVL, FLLVIMGGVFVMETVSVILQV, and VIIRFWIISLMLVLFGLVTLK.

The protein belongs to the glycosyltransferase 4 family. MraY subfamily. Requires Mg(2+) as cofactor.

Its subcellular location is the cell inner membrane. It carries out the reaction UDP-N-acetyl-alpha-D-muramoyl-L-alanyl-gamma-D-glutamyl-meso-2,6-diaminopimeloyl-D-alanyl-D-alanine + di-trans,octa-cis-undecaprenyl phosphate = di-trans,octa-cis-undecaprenyl diphospho-N-acetyl-alpha-D-muramoyl-L-alanyl-D-glutamyl-meso-2,6-diaminopimeloyl-D-alanyl-D-alanine + UMP. The protein operates within cell wall biogenesis; peptidoglycan biosynthesis. Catalyzes the initial step of the lipid cycle reactions in the biosynthesis of the cell wall peptidoglycan: transfers peptidoglycan precursor phospho-MurNAc-pentapeptide from UDP-MurNAc-pentapeptide onto the lipid carrier undecaprenyl phosphate, yielding undecaprenyl-pyrophosphoryl-MurNAc-pentapeptide, known as lipid I. This chain is Phospho-N-acetylmuramoyl-pentapeptide-transferase, found in Mannheimia succiniciproducens (strain KCTC 0769BP / MBEL55E).